Reading from the N-terminus, the 1291-residue chain is MSGPLEGADGGGDPRPGEPFCPGGVPSPGAPQHRPCPGPSLADDTDANSNGSSGNESNGPESRGASQRSSHSSSSGNGKDSALLETTESSKSTNSQSPSPPSSSIAYSLLSASSEQDNPSTSGCSSEQSARARTQKELMTALRELKLRLPPERRGKGRSGTLATLQYALACVKQVQANQEYYQQWSLEEGEPCAMDMSTYTLEELEHITSEYTLRNQDTFSVAVSFLTGRIVYISEQAGVLLRCKRDVFRGARFSELLAPQDVGVFYGSTTPSRLPTWGTGTSAGSGLKDFTQEKSVFCRIRGGPDRDPGPRYQPFRLTPYVTKIRVSDGAPAQPCCLLIAERIHSGYEAPRIPPDKRIFTTRHTPSCLFQDVDERAAPLLGYLPQDLLGAPVLLFLHPEDRPLMLAIHKKILQLAGQPFDHSPIRFCARNGEYVTMDTSWAGFVHPWSRKVAFVLGRHKVRTAPLNEDVFTPPAPSPAPSLDSDIQELSEQIHRLLLQPVHSSSPTGLCGVGPLMSPGPLHSPGSSSDSNGGDAEGPGPPAPVTFQQICKDVHLVKHQGQQLFIESRAKPPPRPRLLATGTFKAKVLPCQSPNPELEVAPVPDQASLALAPEEPERKETSGCSYQQINCLDSILRYLESCNIPSTTKRKCASSSSYTASSASDDDKQRAGPVPVGAKKDPSSAMLSGEGATPRKEPVVGGTLSPLALANKAESVVSVTSQCSFSSTIVHVGDKKPPESDIIMMEDLPGLAPGPAPSPAPSPTVAPDPTPDAYRPVGLTKAVLSLHTQKEEQAFLNRFRDLGRLRGLDTSSVAPSAPGCHHGPIPPGRRHHCRSKAKRSRHHHHQTPRPETPCYVSHPSPVPSSGPWPPPPATTPFPAMVQPYPLPVFSPRGGPQPLPPAPTSVSPATFPSPLVTPMVALVLPNYLFPTPPSYPYGVSQAPVEGPPTPASHSPSPSLPPPPLSPPHRPDSPLFNSRCSSPLQLNLLQLEESPRTEGGAAAGGPGSSAGPLPPSEETAEPEARLVEVTESSNQDALSGSSDLLELLLQEDSRSGTGSAASGSLGSGLGSGSGSGSHEGGSTSASITRSSQSSHTSKYFGSIDSSEAEAGAARARTEPGDQVIKCVLQDPIWLLMANADQRVMMTYQVPSRDAASVLKQDRERLRAMQKQQPRFSEDQRRELGAVHSWVRKGQLPRALDVTACVDCGSSVQDPGHSDDPLFSELDGLGLEPMEEGGGEGGGCGVGGGGGDGGEEAQTQIGAKGSSSQDSAMEEEEQGGGSSSPALPAEENSTS.

Residues Met-1–Thr-134 form a disordered region. An interaction with BTRC region spans residues Met-1 to Pro-151. The segment covering Asn-48–Glu-115 has biased composition (low complexity). Polar residues predominate over residues Gln-116 to Ala-132. A Phosphothreonine; by CSNK1E modification is found at Thr-121. Residues Ser-122 and Ser-126 each carry the phosphoserine; by CSNK1E modification. Positions Leu-138–Leu-147 match the Nuclear export signal 1 motif. PAS domains lie at Ile-208–Leu-275 and Tyr-348–Gln-414. A PAC domain is found at His-422–Pro-465. The Nuclear export signal 2 signature appears at Leu-489–Leu-498. Disordered regions lie at residues Gly-508 to Val-544 and Thr-647 to Val-698. Low complexity-rich tracts occupy residues Gly-513–Gly-533 and Ala-652–Ala-662. A required for phosphorylation by CSNK1E region spans residues Glu-596–Ser-815. Phosphoserine occurs at positions 661, 663, and 704. Disordered regions lie at residues Gly-749–Ala-772, Thr-809–Thr-873, and Ser-938–Gly-1037. Positions Ala-751–Thr-769 are enriched in pro residues. Position 815 is a phosphoserine (Ser-815). The short motif at Ile-824 to Arg-840 is the Nuclear localization signal element. The span at Gly-827–Thr-846 shows a compositional bias: basic residues. Composition is skewed to pro residues over residues Ser-859 to Thr-873 and Pro-955 to Pro-965. Residues Phe-973–Leu-985 are compositionally biased toward polar residues. 2 positions are modified to phosphoserine: Ser-978 and Ser-979. Positions Leu-981 to Leu-988 match the Nuclear export signal 3 motif. The LXXLL motif lies at Leu-1042–Leu-1046. Low complexity predominate over residues Arg-1051–Ser-1061. 2 disordered regions span residues Arg-1051–Ser-1099 and Ser-1207–Ser-1291. The segment covering Leu-1062–Glu-1076 has biased composition (gly residues). Residues Gly-1077–Ser-1094 are compositionally biased toward low complexity. The tract at residues Ser-1148–Ser-1291 is CRY binding domain. Residues Gly-1235 to Asp-1248 are compositionally biased toward gly residues. Positions Ala-1253 to Ser-1267 are enriched in polar residues.

In terms of assembly, homodimer. Component of the circadian core oscillator, which includes the CRY proteins, CLOCK or NPAS2, BMAL1 or BMAL2, CSNK1D and/or CSNK1E, TIMELESS, and the PER proteins. Interacts directly with TIMELESS. Interacts directly with PER2, PER3, CRY1 and CRY2. Interacts with BMAL1 and CLOCK. Interacts with GPRASP1. Interacts (phosphorylated) with BTRC and FBXW11; the interactions trigger proteasomal degradation. Interacts with NONO and SFPQ. Interacts with WDR5. Interacts with U2AF1L4 (Isoform 3). Interacts with USP2. Interacts with HNF4A. Post-translationally, phosphorylated on serine residues by CSNK1D, CSNK1E and probably also by CSNK1G2. Phosphorylation by CSNK1D or CSNK1E promotes nuclear location of PER proteins as well as ubiquitination and subsequent degradation. May be dephosphorylated by PP1. Ubiquitinated; requires phosphorylation by CSNK1E and interaction with BTRC and FBXW11. Deubiquitinated by USP2. In brain, highest expression is observed in the SCN. Highly expressed in the pyramidal cell layer of the piriform cortex, the periventricular part of the caudate-putamen, many thalamic nuclei, and the granular layer of the cerebellar cortex. Weaker expression is detected in most area of the brain, including cortical and non cortical structures. Expression but no oscillations occurs in the glomerular and mitral cell layers of the olfactory bulb, the internal granular layer of the cerebellum, the cornu ammonis and dentate gyrus of the hippocampus, the cerebral and piriform cortices. Expressed in the renal cortex (at protein level). Also found in heart, brain, bladder, lumbar spinal cord, spleen, lung, liver, skeletal muscle and testis.

The protein localises to the nucleus. It localises to the cytoplasm. Transcriptional repressor which forms a core component of the circadian clock. The circadian clock, an internal time-keeping system, regulates various physiological processes through the generation of approximately 24 hour circadian rhythms in gene expression, which are translated into rhythms in metabolism and behavior. It is derived from the Latin roots 'circa' (about) and 'diem' (day) and acts as an important regulator of a wide array of physiological functions including metabolism, sleep, body temperature, blood pressure, endocrine, immune, cardiovascular, and renal function. Consists of two major components: the central clock, residing in the suprachiasmatic nucleus (SCN) of the brain, and the peripheral clocks that are present in nearly every tissue and organ system. Both the central and peripheral clocks can be reset by environmental cues, also known as Zeitgebers (German for 'timegivers'). The predominant Zeitgeber for the central clock is light, which is sensed by retina and signals directly to the SCN. The central clock entrains the peripheral clocks through neuronal and hormonal signals, body temperature and feeding-related cues, aligning all clocks with the external light/dark cycle. Circadian rhythms allow an organism to achieve temporal homeostasis with its environment at the molecular level by regulating gene expression to create a peak of protein expression once every 24 hours to control when a particular physiological process is most active with respect to the solar day. Transcription and translation of core clock components (CLOCK, NPAS2, BMAL1, BMAL2, PER1, PER2, PER3, CRY1 and CRY2) plays a critical role in rhythm generation, whereas delays imposed by post-translational modifications (PTMs) are important for determining the period (tau) of the rhythms (tau refers to the period of a rhythm and is the length, in time, of one complete cycle). A diurnal rhythm is synchronized with the day/night cycle, while the ultradian and infradian rhythms have a period shorter and longer than 24 hours, respectively. Disruptions in the circadian rhythms contribute to the pathology of cardiovascular diseases, cancer, metabolic syndromes and aging. A transcription/translation feedback loop (TTFL) forms the core of the molecular circadian clock mechanism. Transcription factors, CLOCK or NPAS2 and BMAL1 or BMAL2, form the positive limb of the feedback loop, act in the form of a heterodimer and activate the transcription of core clock genes and clock-controlled genes (involved in key metabolic processes), harboring E-box elements (5'-CACGTG-3') within their promoters. The core clock genes: PER1/2/3 and CRY1/2 which are transcriptional repressors form the negative limb of the feedback loop and interact with the CLOCK|NPAS2-BMAL1|BMAL2 heterodimer inhibiting its activity and thereby negatively regulating their own expression. This heterodimer also activates nuclear receptors NR1D1/2 and RORA/B/G, which form a second feedback loop and which activate and repress BMAL1 transcription, respectively. Regulates circadian target genes expression at post-transcriptional levels, but may not be required for the repression at transcriptional level. Controls PER2 protein decay. Represses CRY2 preventing its repression on CLOCK/BMAL1 target genes such as FXYD5 and SCNN1A in kidney and PPARA in liver. Besides its involvement in the maintenance of the circadian clock, has an important function in the regulation of several processes. Participates in the repression of glucocorticoid receptor NR3C1/GR-induced transcriptional activity by reducing the association of NR3C1/GR to glucocorticoid response elements (GREs) by BMAL1:CLOCK. Plays a role in the modulation of the neuroinflammatory state via the regulation of inflammatory mediators release, such as CCL2 and IL6. In spinal astrocytes, negatively regulates the MAPK14/p38 and MAPK8/JNK MAPK cascades as well as the subsequent activation of NFkappaB. Coordinately regulates the expression of multiple genes that are involved in the regulation of renal sodium reabsorption. Can act as gene expression activator in a gene and tissue specific manner, in kidney enhances WNK1 and SLC12A3 expression in collaboration with CLOCK. Modulates hair follicle cycling. Represses the CLOCK-BMAL1 induced transcription of BHLHE40/DEC1. The protein is Period circadian protein homolog 1 (Per1) of Mus musculus (Mouse).